Consider the following 229-residue polypeptide: MPSMAEIYVKELRERDPATVDTLFLDNAEDGQIGGLTDQLINLEMLSMVKCGLTTLAGFPTLPALTYLDISDNQLGDNASFDVLVKNAPDLKKITLASNKLSLDNLRCLKVLPNLFELDLSNNPSLGLLEDYREKMFEMIPSLKILDGCDVDGEEVEEEFAGEGGEDSEEGSGDEDGPGLSYLEKSQFSDDETDDYAPEGGDAEPRGTKRGASDNGEEPDNKKAAGDDE.

4 LRR repeats span residues T19–L40, N42–P63, A64–V85, and D90–K110. One can recognise an LRRCT domain in the interval P124–G164. Positions E155–G177 are enriched in acidic residues. The disordered stretch occupies residues E155–E229. Basic and acidic residues predominate over residues P219–E229.

The protein belongs to the ANP32 family.

The sequence is that of Acidic leucine-rich nuclear phosphoprotein 32-related protein 1 from Caenorhabditis elegans.